The chain runs to 929 residues: Isoleucine--tRNA ligase (929 aa).

A 'HIGH' region motif is present at residues 58 to 68 (PYANGDIHIGH). Position 563 (Glu563) interacts with L-isoleucyl-5'-AMP. The short motif at 605-609 (KMSKS) is the 'KMSKS' region element. Lys608 contributes to the ATP binding site. 4 residues coordinate Zn(2+): Cys892, Cys895, Cys912, and Cys915.

It belongs to the class-I aminoacyl-tRNA synthetase family. IleS type 1 subfamily. Monomer. The cofactor is Zn(2+).

It localises to the cytoplasm. The catalysed reaction is tRNA(Ile) + L-isoleucine + ATP = L-isoleucyl-tRNA(Ile) + AMP + diphosphate. Functionally, catalyzes the attachment of isoleucine to tRNA(Ile). As IleRS can inadvertently accommodate and process structurally similar amino acids such as valine, to avoid such errors it has two additional distinct tRNA(Ile)-dependent editing activities. One activity is designated as 'pretransfer' editing and involves the hydrolysis of activated Val-AMP. The other activity is designated 'posttransfer' editing and involves deacylation of mischarged Val-tRNA(Ile). The protein is Isoleucine--tRNA ligase of Neisseria meningitidis serogroup B (strain ATCC BAA-335 / MC58).